Reading from the N-terminus, the 63-residue chain is Short neurotoxin 2 (63 aa).

Cystine bridges form between cysteine 3–cysteine 21, cysteine 15–cysteine 39, cysteine 43–cysteine 49, and cysteine 50–cysteine 55.

Belongs to the three-finger toxin family. Short-chain subfamily. Orphan group XVIII sub-subfamily. In terms of tissue distribution, expressed by the venom gland.

It is found in the secreted. Blocks both the muscle-twitch response to nerve stimulation and the response to exogenous acetylcholine. The sequence is that of Short neurotoxin 2 from Bungarus fasciatus (Banded krait).